Here is a 964-residue protein sequence, read N- to C-terminus: Translation initiation factor IF-2 (964 aa).

Residues 35–353 (ASSTIEPPVV…RQKRNEYESM (319 aa)) are disordered. Over residues 64–108 (KPTPAKPAAKPGAPAPKPGTAQKPTAPTPGAVAAPKPGTAAAKPT) the composition is skewed to low complexity. Pro residues predominate over residues 124-133 (PAKPTAPKPA). Residues 145-155 (AAKKAAEDKAT) are compositionally biased toward basic and acidic residues. The segment covering 166–178 (NAMPRPMAKPGPK) has biased composition (pro residues). A compositionally biased stretch (low complexity) spans 220–233 (PRPQGGQRSGAPRD). Composition is skewed to gly residues over residues 234 to 252 (GQGG…GPRP) and 290 to 333 (GKGG…GRPG). Residues 337–346 (RRGRKSKRQK) show a composition bias toward basic residues. The tr-type G domain maps to 459–631 (KRPPVVTVMG…VCLTADAELD (173 aa)). The segment at 468–475 (GHVDHGKT) is G1. 468-475 (GHVDHGKT) lines the GTP pocket. Residues 493–497 (GITQG) are G2. Residues 518 to 521 (DTPG) form a G3 region. GTP is bound by residues 518–522 (DTPGH) and 572–575 (NKID). The tract at residues 572–575 (NKID) is G4. Residues 608–610 (SAK) form a G5 region.

Belongs to the TRAFAC class translation factor GTPase superfamily. Classic translation factor GTPase family. IF-2 subfamily.

It is found in the cytoplasm. Its function is as follows. One of the essential components for the initiation of protein synthesis. Protects formylmethionyl-tRNA from spontaneous hydrolysis and promotes its binding to the 30S ribosomal subunits. Also involved in the hydrolysis of GTP during the formation of the 70S ribosomal complex. This Corynebacterium efficiens (strain DSM 44549 / YS-314 / AJ 12310 / JCM 11189 / NBRC 100395) protein is Translation initiation factor IF-2.